A 95-amino-acid chain; its full sequence is Osteocalcin (95 aa).

Positions methionine 1 to alanine 23 are cleaved as a signal peptide. Positions lysine 24–arginine 49 are excised as a propeptide. Positions arginine 46–glycine 92 constitute a Gla domain. The Ca(2+) site is built by glutamate 62, glutamate 66, glutamate 69, and aspartate 75. 3 positions are modified to 4-carboxyglutamate: glutamate 62, glutamate 66, and glutamate 69. Cysteine 68 and cysteine 74 are disulfide-bonded.

It belongs to the osteocalcin/matrix Gla protein family. Post-translationally, gamma-carboxyglutamate residues are formed by vitamin K dependent carboxylation by GGCX. These residues are essential for the binding of calcium. Carboxylated in a Ptprv/Esp-dependent process. Decarboxylation promotes the hormone activity. Bone.

The protein localises to the secreted. In terms of biological role, the carboxylated form is one of the main organic components of the bone matrix, which constitutes 1-2% of the total bone protein: it acts as a negative regulator of bone formation and is required to limit bone formation without impairing bone resorption or mineralization. The carboxylated form binds strongly to apatite and calcium. Its function is as follows. The uncarboxylated form acts as a hormone secreted by osteoblasts, which regulates different cellular processes, such as energy metabolism, male fertility and brain development. Regulates of energy metabolism by acting as a hormone favoring pancreatic beta-cell proliferation, insulin secretion and sensitivity and energy expenditure. Uncarboxylated osteocalcin hormone also promotes testosterone production in the testes: acts as a ligand for G protein-coupled receptor GPRC6A at the surface of Leydig cells, initiating a signaling response that promotes the expression of enzymes required for testosterone synthesis in a CREB-dependent manner. Also acts as a regulator of brain development: osteocalcin hormone crosses the blood-brain barrier and acts as a ligand for GPR158 on neurons, initiating a signaling response that prevents neuronal apoptosis in the hippocampus, favors the synthesis of all monoamine neurotransmitters and inhibits that of gamma-aminobutyric acid (GABA). Osteocalcin also crosses the placenta during pregnancy and maternal osteocalcin is required for fetal brain development. This is Osteocalcin from Mus musculus (Mouse).